The sequence spans 622 residues: Low affinity potassium transport system protein Kup (622 aa).

Helical transmembrane passes span 9-29 (LPAVTLAAIGVVYGDIGTSPL), 49-69 (VFGFLSLIFWLLVLVVSLKYL), 101-121 (VLVIMGLIGGSFFYGEVVITP), 137-157 (PSMDSYIVPLSIVVLTLLFII), 165-185 (VGKLFAPVMLIWFLTLGVLGA), 212-232 (AVSFFALGAVVLAITGVEALY), 247-267 (WFTVVLPSLVLNYFGQGALLL), 279-299 (LLAPDWALIPLMILATLATII), 337-357 (IYIPAINWMLYIAVVIVIVSF), 363-383 (LAAAYGIAVTGTMVITSILFC), 397-417 (AWVLLAGLLVIDVPMFLANVV), and 419-439 (ILSGGWLPLALGMVMFIIMTT).

It belongs to the HAK/KUP transporter (TC 2.A.72) family.

Its subcellular location is the cell inner membrane. The catalysed reaction is K(+)(in) + H(+)(in) = K(+)(out) + H(+)(out). Functionally, responsible for the low-affinity transport of potassium into the cell. Likely operates as a K(+):H(+) symporter. The polypeptide is Low affinity potassium transport system protein Kup (Pectobacterium carotovorum subsp. carotovorum (strain PC1)).